The chain runs to 276 residues: Probable NADH-ubiquinone oxidoreductase 30.4 kDa subunit, mitochondrial (276 aa).

The tract at residues 248 to 276 (EPVGEGKDFTPESFKLPTPQPEPEQEEKK) is disordered.

It belongs to the complex I 30 kDa subunit family. Complex I is composed of about 30 different subunits. This is a component of the iron-sulfur protein fraction.

It is found in the mitochondrion inner membrane. The catalysed reaction is a ubiquinone + NADH + 5 H(+)(in) = a ubiquinol + NAD(+) + 4 H(+)(out). In terms of biological role, core subunit of the mitochondrial membrane respiratory chain NADH dehydrogenase (Complex I) that is believed to belong to the minimal assembly required for catalysis. Complex I functions in the transfer of electrons from NADH to the respiratory chain. The immediate electron acceptor for the enzyme is believed to be ubiquinone. Essential for N-alkane assimilation. The polypeptide is Probable NADH-ubiquinone oxidoreductase 30.4 kDa subunit, mitochondrial (ALI1) (Candida maltosa (Yeast)).